Consider the following 88-residue polypeptide: LKFVVLICLVIMASTSAQQCGDETCGAGTCCAVFSQNHCRRLSQMYDLCSDHSDASPSGNYLFFCPCEPGLHCDRNTWTCTEGSSRSE.

The N-terminal stretch at 1–17 is a signal peptide; sequence LKFVVLICLVIMASTSA. Residue Gln-18 is modified to Pyrrolidone carboxylic acid. 5 disulfides stabilise this stretch: Cys-20/Cys-31, Cys-25/Cys-39, Cys-30/Cys-65, Cys-49/Cys-73, and Cys-67/Cys-80. A propeptide spanning residues 86 to 88 is cleaved from the precursor; that stretch reads RSE.

This sequence belongs to the MIT-like AcTx family. In terms of tissue distribution, expressed by the venom gland.

Its subcellular location is the secreted. The sequence is that of U1-hexatoxin-Iw1c from Illawarra wisharti (Illawarra funnel-web spider).